Consider the following 29-residue polypeptide: Cytochrome b6-f complex subunit 8 (29 aa).

Residues 3–23 (ILALGWVSVLALFTWSIAMVV) form a helical membrane-spanning segment.

The protein belongs to the PetN family. As to quaternary structure, the 4 large subunits of the cytochrome b6-f complex are cytochrome b6, subunit IV (17 kDa polypeptide, PetD), cytochrome f and the Rieske protein, while the 4 small subunits are PetG, PetL, PetM and PetN. The complex functions as a dimer.

It is found in the cellular thylakoid membrane. Functionally, component of the cytochrome b6-f complex, which mediates electron transfer between photosystem II (PSII) and photosystem I (PSI), cyclic electron flow around PSI, and state transitions. The protein is Cytochrome b6-f complex subunit 8 of Gloeothece citriformis (strain PCC 7424) (Cyanothece sp. (strain PCC 7424)).